Reading from the N-terminus, the 210-residue chain is Riboflavin kinase (210 aa).

Positions 1-11 are enriched in pro residues; sequence MRPSNPRPPVT. The segment at 1–24 is disordered; the sequence is MRPSNPRPPVTGPDSGPEAPFPIR. Mg(2+) is bound by residues threonine 44 and asparagine 46. Glutamate 113 acts as the Nucleophile in catalysis.

This sequence belongs to the flavokinase family. Requires Zn(2+) as cofactor. The cofactor is Mg(2+).

The enzyme catalyses riboflavin + ATP = FMN + ADP + H(+). It participates in cofactor biosynthesis; FMN biosynthesis; FMN from riboflavin (ATP route): step 1/1. Functionally, catalyzes the phosphorylation of riboflavin (vitamin B2) to form flavin mononucleotide (FMN) coenzyme. The polypeptide is Riboflavin kinase (fmn1) (Emericella nidulans (strain FGSC A4 / ATCC 38163 / CBS 112.46 / NRRL 194 / M139) (Aspergillus nidulans)).